A 360-amino-acid polypeptide reads, in one-letter code: UPF0283 membrane protein Asuc_0957 (360 aa).

3 helical membrane-spanning segments follow: residues 74–94 (VIAVAVLFLGATVAQSVQWLI), 102–122 (WIYFAFAVVGCSVVGLGLSAL), and 215–235 (AVENGIVVAISPLAIVDMLFL).

Belongs to the UPF0283 family.

Its subcellular location is the cell inner membrane. The chain is UPF0283 membrane protein Asuc_0957 from Actinobacillus succinogenes (strain ATCC 55618 / DSM 22257 / CCUG 43843 / 130Z).